Here is a 382-residue protein sequence, read N- to C-terminus: 8-amino-7-oxononanoate synthase (382 aa).

Residue R26 participates in substrate binding. 104–105 (GY) is a binding site for pyridoxal 5'-phosphate. Substrate is bound at residue H129. Pyridoxal 5'-phosphate contacts are provided by residues S175, 200 to 203 (DEAH), and 232 to 235 (TLSK). K235 is subject to N6-(pyridoxal phosphate)lysine. T345 serves as a coordination point for substrate.

It belongs to the class-II pyridoxal-phosphate-dependent aminotransferase family. BioF subfamily. As to quaternary structure, homodimer. It depends on pyridoxal 5'-phosphate as a cofactor.

The catalysed reaction is 6-carboxyhexanoyl-[ACP] + L-alanine + H(+) = (8S)-8-amino-7-oxononanoate + holo-[ACP] + CO2. It functions in the pathway cofactor biosynthesis; biotin biosynthesis. Its function is as follows. Catalyzes the decarboxylative condensation of pimeloyl-[acyl-carrier protein] and L-alanine to produce 8-amino-7-oxononanoate (AON), [acyl-carrier protein], and carbon dioxide. This chain is 8-amino-7-oxononanoate synthase, found in Mycobacterium sp. (strain KMS).